A 78-amino-acid polypeptide reads, in one-letter code: Short neurotoxin OH-26 (78 aa).

A signal peptide spans 1-21; sequence MKNLLLTFLVVTIVCLDLGYT. 4 disulfide bridges follow: Cys-24-Cys-40, Cys-33-Cys-58, Cys-62-Cys-70, and Cys-71-Cys-76.

Belongs to the three-finger toxin family. Short-chain subfamily. As to expression, expressed by the venom gland.

The protein resides in the secreted. In terms of biological role, this three-finger toxin binds and inhibits the nicotinic acetylcholine receptor (nAChR). In Ophiophagus hannah (King cobra), this protein is Short neurotoxin OH-26.